A 141-amino-acid polypeptide reads, in one-letter code: Nucleoside diphosphate kinase (141 aa).

Residues lysine 9, phenylalanine 57, arginine 85, threonine 91, arginine 102, and asparagine 112 each contribute to the ATP site. The Pros-phosphohistidine intermediate role is filled by histidine 115.

Belongs to the NDK family. As to quaternary structure, homotetramer. Requires Mg(2+) as cofactor.

The protein localises to the cytoplasm. It carries out the reaction a 2'-deoxyribonucleoside 5'-diphosphate + ATP = a 2'-deoxyribonucleoside 5'-triphosphate + ADP. The catalysed reaction is a ribonucleoside 5'-diphosphate + ATP = a ribonucleoside 5'-triphosphate + ADP. Its function is as follows. Major role in the synthesis of nucleoside triphosphates other than ATP. The ATP gamma phosphate is transferred to the NDP beta phosphate via a ping-pong mechanism, using a phosphorylated active-site intermediate. This is Nucleoside diphosphate kinase from Chlamydia caviae (strain ATCC VR-813 / DSM 19441 / 03DC25 / GPIC) (Chlamydophila caviae).